The following is a 509-amino-acid chain: 5-OH-xanthotoxin synthase (509 aa).

The helical transmembrane segment at 5–25 (AVVILLILAFPIASVYVLFYH) threads the bilayer. The interval 368–373 (TGALLI) is substrate specificity. Cysteine 449 contributes to the heme binding site.

The protein belongs to the cytochrome P450 family. Heme serves as cofactor.

Its subcellular location is the microsome membrane. It catalyses the reaction xanthotoxin + reduced [NADPH--hemoprotein reductase] + O2 = 5-hydroxyxanthotoxin + oxidized [NADPH--hemoprotein reductase] + H2O + 2 H(+). Its pathway is secondary metabolite biosynthesis. In terms of biological role, involved in the biosynthesis of coumarins and furanocoumarins (FCs), natural products required for defense responses against attacks by predators with potential medical and agroindustrial usages such as anticoagulant, rodenticide and artificial vanilla substitutes. Catalyzes the conversion of xanthotoxin into 5-hydroxyxanthotoxin. This chain is 5-OH-xanthotoxin synthase, found in Ammi majus (Bishop's weed).